Consider the following 238-residue polypeptide: Large ribosomal subunit protein bL17m (238 aa).

Belongs to the bacterial ribosomal protein bL17 family. As to quaternary structure, component of the mitochondrial large ribosomal subunit (mt-LSU). Mature yeast 74S mitochondrial ribosomes consist of a small (37S) and a large (54S) subunit. The 37S small subunit contains a 15S ribosomal RNA (15S mt-rRNA) and 34 different proteins. The 54S large subunit contains a 21S rRNA (21S mt-rRNA) and 46 different proteins.

It is found in the mitochondrion. Its function is as follows. Component of the mitochondrial ribosome (mitoribosome), a dedicated translation machinery responsible for the synthesis of mitochondrial genome-encoded proteins, including at least some of the essential transmembrane subunits of the mitochondrial respiratory chain. The mitoribosomes are attached to the mitochondrial inner membrane and translation products are cotranslationally integrated into the membrane. The sequence is that of Large ribosomal subunit protein bL17m (MRPL8) from Saccharomyces cerevisiae (strain ATCC 204508 / S288c) (Baker's yeast).